The primary structure comprises 1605 residues: Kinesin-like protein klp-12 (1605 aa).

Residues 5–358 (CVQVALRIRP…MKYANRAKEI (354 aa)) enclose the Kinesin motor domain. An ATP-binding site is contributed by 84 to 91 (GQTGSGKT). Residues T91 and S217 each coordinate Mg(2+). Disordered regions lie at residues 548–596 (GENV…EESE), 1085–1152 (VSDA…SNNN), and 1198–1232 (SRSN…SSSK). Residues 550 to 559 (NVSSEYSSMA) are compositionally biased toward polar residues. The span at 560-596 (QDEDGTSNEAEELLDEEDLDEDEDETAEEKQEQEESE) shows a compositional bias: acidic residues. A coiled-coil region spans residues 575–730 (EEDLDEDEDE…KKAKVELIKK (156 aa)). The span at 1116–1152 (VSTSPASTSFANSTSQSPSFSRNTRFRSTVGGVSNNN) shows a compositional bias: polar residues. A compositionally biased stretch (low complexity) spans 1200–1232 (SNLMSSSSSTTTTTLSSSNLLNPRGTTSSSSSK). WD repeat units follow at residues 1282-1319 (GHAR…EIRT), 1389-1427 (FLET…PLGR), 1525-1566 (AHQQ…RMKL), and 1573-1605 (AHQE…SNAV).

Belongs to the TRAFAC class myosin-kinesin ATPase superfamily. Kinesin family. In terms of assembly, component of a complex at least composed of alpha tubulin and beta tubulin. Within the complex, interacts with the alpha tubulin and beta tubulin dimer.

Its subcellular location is the cytoplasm. It is found in the cytoskeleton. Functionally, microtubule-binding motor protein which has ATPase activity. In complex with alpha and beta tubulins, preferentially binds to the growing microtubule plus-end to stabilize it and detaches following ATP hydrolysis. Negatively regulates axonal length through inhibiting microtubule polymerization at its plus-end. The protein is Kinesin-like protein klp-12 of Caenorhabditis elegans.